Consider the following 381-residue polypeptide: Protein COS8 (381 aa).

At 1 to 42 (MKENEVKDEKSVDVLSFKQLEFQKTVLPQDVFRNELTWFCYE) the chain is on the extracellular side. The helical transmembrane segment at 43 to 63 (IYKSLAFRIWMLLWLPLSVWW) threads the bilayer. Residues 64-72 (KLSSNWIHP) are Cytoplasmic-facing. Residues 73 to 93 (LIVSLLVLFLGPFFVLVICGL) form a helical membrane-spanning segment. Over 94–237 (SRKRSLSKQL…WILKRIFNLR (144 aa)) the chain is Extracellular. The chain crosses the membrane as a helical span at residues 238 to 258 (CLPLFLYYFLIVYTSGNADLI). Residues 259 to 381 (SRFLFPVVMF…QSARNEKPLK (123 aa)) are Cytoplasmic-facing.

The protein belongs to the DUP/COS family.

It localises to the membrane. This chain is Protein COS8 (COS8), found in Saccharomyces cerevisiae (strain ATCC 204508 / S288c) (Baker's yeast).